Consider the following 97-residue polypeptide: Large ribosomal subunit protein uL30m (97 aa).

This sequence belongs to the universal ribosomal protein uL30 family. In terms of assembly, component of the mitochondrial large ribosomal subunit (mt-LSU). Mature yeast 74S mitochondrial ribosomes consist of a small (37S) and a large (54S) subunit. The 37S small subunit contains a 15S ribosomal RNA (15S mt-rRNA) and at least 32 different proteins. The 54S large subunit contains a 21S rRNA (21S mt-rRNA) and at least 45 different proteins.

It localises to the mitochondrion. Its function is as follows. Component of the mitochondrial ribosome (mitoribosome), a dedicated translation machinery responsible for the synthesis of mitochondrial genome-encoded proteins, including at least some of the essential transmembrane subunits of the mitochondrial respiratory chain. The mitoribosomes are attached to the mitochondrial inner membrane and translation products are cotranslationally integrated into the membrane. The chain is Large ribosomal subunit protein uL30m (mrpl33) from Schizosaccharomyces pombe (strain 972 / ATCC 24843) (Fission yeast).